Here is a 416-residue protein sequence, read N- to C-terminus: S-adenosylmethionine synthase (416 aa).

Position 14 (His14) interacts with ATP. Asp16 is a binding site for Mg(2+). Glu42 is a K(+) binding site. Glu55 and Gln98 together coordinate L-methionine. Positions 98–108 (QSADINQGVDR) are flexible loop. Residues 164–166 (DAK), 240–241 (KF), Asp249, 255–256 (RK), Ala272, and Lys276 contribute to the ATP site. Asp249 contributes to the L-methionine binding site. Lys280 lines the L-methionine pocket.

This sequence belongs to the AdoMet synthase family. Homotetramer; dimer of dimers. Mg(2+) serves as cofactor. It depends on K(+) as a cofactor.

It is found in the cytoplasm. The catalysed reaction is L-methionine + ATP + H2O = S-adenosyl-L-methionine + phosphate + diphosphate. It functions in the pathway amino-acid biosynthesis; S-adenosyl-L-methionine biosynthesis; S-adenosyl-L-methionine from L-methionine: step 1/1. In terms of biological role, catalyzes the formation of S-adenosylmethionine (AdoMet) from methionine and ATP. The overall synthetic reaction is composed of two sequential steps, AdoMet formation and the subsequent tripolyphosphate hydrolysis which occurs prior to release of AdoMet from the enzyme. The protein is S-adenosylmethionine synthase of Flavobacterium psychrophilum (strain ATCC 49511 / DSM 21280 / CIP 103535 / JIP02/86).